The chain runs to 345 residues: 3-hydroxy-5-methyl-1-naphthoate 3-O-methyltransferase (345 aa).

An S-adenosyl-L-methionine-binding site is contributed by Asp205. His252 acts as the Proton acceptor in catalysis.

This sequence belongs to the class I-like SAM-binding methyltransferase superfamily. Cation-independent O-methyltransferase family.

It catalyses the reaction 3-hydroxy-5-methyl-1-naphthoate + S-adenosyl-L-methionine = 3-methoxy-5-methyl-1-naphthoate + S-adenosyl-L-homocysteine + H(+). The protein operates within antibiotic biosynthesis. Inhibited by different divalent cations, such as Mg(2+), Mn(2+), Fe(2+), Cu(2+) and Zn(2+). O-methyltransferase that mediates the formation of 3-methoxy-5-methyl-1-naphthoate from 3-hydroxy-5-methyl-1-naphthoate in the biosynthesis of the antitumor antibiotic azinomycin B. The protein is 3-hydroxy-5-methyl-1-naphthoate 3-O-methyltransferase of Streptomyces sahachiroi.